Consider the following 398-residue polypeptide: Succinate--CoA ligase [ADP-forming] subunit beta (398 aa).

The ATP-grasp domain maps to 9 to 253; that stretch reads KEILASYGVR…IREENPIEVE (245 aa). Residues Lys50, 57–59, Val106, and Glu116 contribute to the ATP site; that span reads GRG. Mg(2+)-binding residues include Asn208 and Asp222. Residues Asn273 and 330-332 contribute to the substrate site; that span reads GIV.

It belongs to the succinate/malate CoA ligase beta subunit family. In terms of assembly, heterotetramer of two alpha and two beta subunits. Requires Mg(2+) as cofactor.

It catalyses the reaction succinate + ATP + CoA = succinyl-CoA + ADP + phosphate. It carries out the reaction GTP + succinate + CoA = succinyl-CoA + GDP + phosphate. It functions in the pathway carbohydrate metabolism; tricarboxylic acid cycle; succinate from succinyl-CoA (ligase route): step 1/1. In terms of biological role, succinyl-CoA synthetase functions in the citric acid cycle (TCA), coupling the hydrolysis of succinyl-CoA to the synthesis of either ATP or GTP and thus represents the only step of substrate-level phosphorylation in the TCA. The beta subunit provides nucleotide specificity of the enzyme and binds the substrate succinate, while the binding sites for coenzyme A and phosphate are found in the alpha subunit. This is Succinate--CoA ligase [ADP-forming] subunit beta from Flavobacterium psychrophilum (strain ATCC 49511 / DSM 21280 / CIP 103535 / JIP02/86).